The primary structure comprises 48 residues: Large ribosomal subunit protein bL33A (48 aa).

It belongs to the bacterial ribosomal protein bL33 family.

The sequence is that of Large ribosomal subunit protein bL33A from Shouchella clausii (strain KSM-K16) (Alkalihalobacillus clausii).